The sequence spans 122 residues: Large ribosomal subunit protein uL18 (122 aa).

A disordered region spans residues 1-24; sequence MLKKADKNANRLQRHKRVRRKISG. Residues 12 to 22 show a composition bias toward basic residues; sequence LQRHKRVRRKI.

Belongs to the universal ribosomal protein uL18 family. In terms of assembly, part of the 50S ribosomal subunit; part of the 5S rRNA/L5/L18/L25 subcomplex. Contacts the 5S and 23S rRNAs.

Functionally, this is one of the proteins that bind and probably mediate the attachment of the 5S RNA into the large ribosomal subunit, where it forms part of the central protuberance. This chain is Large ribosomal subunit protein uL18, found in Clostridioides difficile (strain 630) (Peptoclostridium difficile).